The primary structure comprises 302 residues: Protoheme IX farnesyltransferase (302 aa).

Helical transmembrane passes span 27 to 47 (VVAL…PGMV), 53 to 73 (LFGL…NHVI), 100 to 120 (LVFA…AVNV), 121 to 141 (LTAV…TVFL), 149 to 169 (IVWG…AVTG), 175 to 195 (PLLL…ALAI), 215 to 235 (VAFT…VSLV), 237 to 257 (FIIH…GIGF), and 273 to 293 (AMPT…LLLV).

Belongs to the UbiA prenyltransferase family. Protoheme IX farnesyltransferase subfamily.

It is found in the cell inner membrane. The enzyme catalyses heme b + (2E,6E)-farnesyl diphosphate + H2O = Fe(II)-heme o + diphosphate. It functions in the pathway porphyrin-containing compound metabolism; heme O biosynthesis; heme O from protoheme: step 1/1. Converts heme B (protoheme IX) to heme O by substitution of the vinyl group on carbon 2 of heme B porphyrin ring with a hydroxyethyl farnesyl side group. This is Protoheme IX farnesyltransferase from Thioalkalivibrio sulfidiphilus (strain HL-EbGR7).